Consider the following 40-residue polypeptide: Ostricacin-3 (40 aa).

Cystine bridges form between Cys8–Cys36, Cys15–Cys30, and Cys20–Cys37.

Its subcellular location is the secreted. Functionally, has antibacterial activity against the Gram-positive bacterium S.aureus 1056 MRSA (MIC=2.78 ug/ml) and the Gram-negative bacterium E.coli O157:H7 (MIC=2.41 ug/ml). Does not have antifungal activity against the yeast C.albicans 3153A. This Struthio camelus (Common ostrich) protein is Ostricacin-3.